The following is a 375-amino-acid chain: Trans-enoyl reductase BOA5 (375 aa).

A compositionally biased stretch (polar residues) spans 1-16; that stretch reads MQAVIQTGPGTLQLTE. Residues 1–21 form a disordered region; that stretch reads MQAVIQTGPGTLQLTENVPKP. 42 to 45 serves as a coordination point for NADP(+); it reads SDWK. 121 to 128 provides a ligand contact to substrate; sequence VGIVTTGL. Residues 147 to 168 form a disordered region; that stretch reads GSAAPQKTRVGPRGWSGGDALT. NADP(+) contacts are provided by residues 185–188, 208–211, Tyr-226, and 273–274; these read STST, SPHN, and LD. 294–298 serves as a coordination point for substrate; it reads ALTIF. An NADP(+)-binding site is contributed by 363–364; sequence VS.

This sequence belongs to the zinc-containing alcohol dehydrogenase family. As to quaternary structure, monomer.

The protein operates within polyketide biosynthesis. In terms of biological role, trans-enoyl reductase; part of the gene cluster A that mediates the biosynthesis of botcinic acid and its botcinin derivatives, acetate-derived polyketides that contribute to virulence when combined with the sesquiterpene botrydial. Botcinic acid and its derivatives have been shown to induce chlorosis and necrosis during host plant infection, but also have antifungal activities. Two polyketide synthases, BOA6 and BOA9, are involved in the biosynthesis of botcinins. BOA6 mediates the formation of the per-methylated tetraketide core by condensation of four units of malonyl-CoA with one unit of acetyl-CoA, which would be methylated in activated methylene groups to yield a bicyclic acid intermediate that could then either be converted to botrylactone derivatives or lose the starter acetate unit through a retro-Claisen type C-C bond cleavage to yield botcinin derivatives. The second polyketide synthase, BOA9, is probably required for the biosynthesis of the tetraketide side chain of botcinins. The methyltransferase (MT) domain within BOA6 is probably responsible for the incorporation of four methyl groups. The trans-enoyl reductase BOA5 might take over the enoyl reductase function of BOA6 that misses an ER domain. The monooxygenases BOA2, BOA3 and BOA4 might be involved in further hydroxylations at C4, C5 and C8, whereas BOA7, close to BOA9, could potentially be involved in the hydroxylation at C4 in the side chain of botcinins. The polypeptide is Trans-enoyl reductase BOA5 (Botryotinia fuckeliana (strain B05.10) (Noble rot fungus)).